Here is a 145-residue protein sequence, read N- to C-terminus: Ribonuclease H (145 aa).

Positions 2–143 (SKKEVAIYTD…ADSLARKAII (142 aa)) constitute an RNase H type-1 domain. Residues Asp-11, Glu-49, Asp-71, and Asp-135 each coordinate Mg(2+).

The protein belongs to the RNase H family. As to quaternary structure, monomer. The cofactor is Mg(2+).

It is found in the cytoplasm. It catalyses the reaction Endonucleolytic cleavage to 5'-phosphomonoester.. Endonuclease that specifically degrades the RNA of RNA-DNA hybrids. This chain is Ribonuclease H, found in Wolbachia sp. subsp. Drosophila simulans (strain wRi).